A 184-amino-acid polypeptide reads, in one-letter code: Casparian strip membrane protein 3 (184 aa).

Topologically, residues 1–22 are cytoplasmic; it reads MEGSGEHGETSKGPLSKGVSRG. Residues 23–43 traverse the membrane as a helical segment; sequence LCILDLIFRVIAVIGTLASAI. Residues 44 to 72 are Extracellular-facing; sequence AMGTTNQTMPFFTQFVQFKERYSDLPTLT. Asn49 carries an N-linked (GlcNAc...) asparagine glycan. A helical transmembrane segment spans residues 73-93; that stretch reads FFVVANSIASAYLIISLPLSI. At 94-105 the chain is on the cytoplasmic side; the sequence is VHIIRSRAKYSR. A helical membrane pass occupies residues 106-126; it reads LILIFFDVAMLALVTAAASAG. Over 127 to 159 the chain is Extracellular; that stretch reads AAIVYLAHNGNVSANWFAICQQFDSFCERISGS. The N-linked (GlcNAc...) asparagine glycan is linked to Asn137. A helical membrane pass occupies residues 160–180; the sequence is LIGSFAAMVVLILLILLSAVA. Over 181-184 the chain is Cytoplasmic; sequence LARR.

Belongs to the Casparian strip membrane proteins (CASP) family. As to quaternary structure, homodimer and heterodimers.

The protein resides in the cell membrane. Functionally, regulates membrane-cell wall junctions and localized cell wall deposition. Required for establishment of the Casparian strip membrane domain (CSD) and the subsequent formation of Casparian strips, a cell wall modification of the root endodermis that determines an apoplastic barrier between the intraorganismal apoplasm and the extraorganismal apoplasm and prevents lateral diffusion. The polypeptide is Casparian strip membrane protein 3 (Brachypodium distachyon (Purple false brome)).